The primary structure comprises 417 residues: UDP-N-acetylglucosamine 1-carboxyvinyltransferase (417 aa).

Residue Lys-22–Asn-23 participates in phosphoenolpyruvate binding. Residue Arg-92 coordinates UDP-N-acetyl-alpha-D-glucosamine. Cys-116 (proton donor) is an active-site residue. At Cys-116 the chain carries 2-(S-cysteinyl)pyruvic acid O-phosphothioketal. UDP-N-acetyl-alpha-D-glucosamine contacts are provided by Asp-304 and Ile-326.

The protein belongs to the EPSP synthase family. MurA subfamily.

The protein localises to the cytoplasm. It carries out the reaction phosphoenolpyruvate + UDP-N-acetyl-alpha-D-glucosamine = UDP-N-acetyl-3-O-(1-carboxyvinyl)-alpha-D-glucosamine + phosphate. It functions in the pathway cell wall biogenesis; peptidoglycan biosynthesis. Functionally, cell wall formation. Adds enolpyruvyl to UDP-N-acetylglucosamine. This is UDP-N-acetylglucosamine 1-carboxyvinyltransferase from Desulforapulum autotrophicum (strain ATCC 43914 / DSM 3382 / VKM B-1955 / HRM2) (Desulfobacterium autotrophicum).